A 362-amino-acid chain; its full sequence is Heat-inducible transcription repressor HrcA (362 aa).

Belongs to the HrcA family.

Functionally, negative regulator of class I heat shock genes (grpE-dnaK-dnaJ and groELS operons). Prevents heat-shock induction of these operons. In Rhizobium leguminosarum bv. trifolii (strain WSM2304), this protein is Heat-inducible transcription repressor HrcA.